The following is a 427-amino-acid chain: Terminal nucleotidyltransferase 5B (427 aa).

Residues 1–11 (MMPSESGDESL) show a composition bias toward acidic residues. Residues 1–46 (MMPSESGDESLEQPAAQVGTGAASAVATAGAAGGGPDLEASSASLG) are disordered. The segment covering 15–30 (AAQVGTGAASAVATAG) has biased composition (low complexity).

This sequence belongs to the TENT family.

It is found in the cytoplasm. Its subcellular location is the nucleus. The catalysed reaction is RNA(n) + ATP = RNA(n)-3'-adenine ribonucleotide + diphosphate. Its function is as follows. Catalyzes the transfer of one adenosine molecule from an ATP to an mRNA poly(A) tail bearing a 3'-OH terminal group in an ATP hydrolysis-dependent manner. May be involved in maintaining the translation efficiency of at least some genes through preventing degradation of their mRNAs. Prefers RNA molecules that are adenosine-rich close to 3'-end. In addition, may inhibit cell proliferation and cell cycle progression through ubiquitination of beta-catenin/CTNNB1. This Rattus norvegicus (Rat) protein is Terminal nucleotidyltransferase 5B.